The following is a 367-amino-acid chain: Aurora kinase (367 aa).

Polar residues-rich tracts occupy residues 1–29 (MQRN…TSRI) and 37–48 (HSPQQRNPNSKI). Positions 1–52 (MQRNSLVNIKLNANSPSKKTTTRPNTSRINKPWRISHSPQQRNPNSKIPSPV) are disordered. Ser-5 carries the phosphoserine; by autocatalysis modification. Ser-76 carries the post-translational modification Phosphoserine. A Protein kinase domain is found at 104-355 (FELGKKLGKG…LGDVKMHPWI (252 aa)). ATP is bound by residues 110-118 (LGKGKFGKV) and Lys-133. Catalysis depends on Asp-227, which acts as the Proton acceptor. Thr-260 carries the post-translational modification Phosphothreonine; by autocatalysis.

It belongs to the protein kinase superfamily. Ser/Thr protein kinase family. Aurora subfamily. Component of the CPC complex at least composed of IPL1, BIR1 and SLI15.

The protein resides in the nucleus. The protein localises to the cytoplasm. Its subcellular location is the cytoskeleton. It localises to the spindle. It is found in the chromosome. The protein resides in the centromere. The protein localises to the kinetochore. It catalyses the reaction L-seryl-[protein] + ATP = O-phospho-L-seryl-[protein] + ADP + H(+). The catalysed reaction is L-threonyl-[protein] + ATP = O-phospho-L-threonyl-[protein] + ADP + H(+). Functionally, component of the chromosomal passenger complex (CPC), a complex that acts as a key regulator of chromosome segregation and cytokinesis. Has a role in error-correction of aberrent kinetochore-microtubule attachments to ensure that sister kinetochores become bioriented and connect to opposite poles by promoting spindle assembly checkpoint signaling. Acts in opposition to the phosphatase PP1. Not required for kinetochore detachment from microtubules during replication of centromeric DNA. Phosphorylates histone H3 to form H3S10ph during mitosis and meiosis. Phosphorylates CNN1, which contributes to the enrichment of CNN1 on anaphase kinetochores. Phosphorylates RGD1. This is Aurora kinase (IPL1) from Saccharomyces cerevisiae (strain ATCC 204508 / S288c) (Baker's yeast).